The chain runs to 561 residues: Excitatory amino acid transporter 4 (561 aa).

Over 1-52 (MSSHGNSLFLRESGAGGGCLQGLQDSLQQRALRTRLRLQTMTREHVRRFLRR) the chain is Cytoplasmic. Ser2 bears the Phosphoserine mark. A run of 3 helical transmembrane segments spans residues 53–73 (NAFI…AFAL), 96–116 (MLQM…MASL), and 130–150 (VYYM…VTII). Residues Asn213, Asn229, and Asn236 are each glycosylated (N-linked (GlcNAc...) asparagine). A run of 3 helical transmembrane segments spans residues 259-282 (SANG…IGGM), 292-319 (FFDS…LFLI), and 341-362 (LTVI…YFLV). The discontinuously helical intramembrane region spans 368-398 (FPFIGGILQALITAMGTSSSSATLPITFRCL). An L-aspartate-binding site is contributed by 385-387 (SSS). Residues 408 to 434 (ITRFVLPVGATVNMDGTALYEALAAIF) traverse the membrane as a helical segment. Residues Gly416, Thr418, and Asn420 each coordinate Na(+). Residues Thr424, 465–469 (IPQAG), Asp498, and Asn505 each bind L-aspartate. The discontinuously helical intramembrane region spans 448-481 (ITTISITATAASVGAAGIPQAGLVTMVIVLTSVG). Residues 495–516 (WFLDRLRTMTNVLGDSIGAAVI) traverse the membrane as a helical segment. Asn505 and Asp509 together coordinate Na(+).

The protein belongs to the dicarboxylate/amino acid:cation symporter (DAACS) (TC 2.A.23) family. SLC1A6 subfamily. As to quaternary structure, homotrimer.

The protein localises to the cell membrane. The enzyme catalyses K(+)(in) + L-glutamate(out) + 3 Na(+)(out) + H(+)(out) = K(+)(out) + L-glutamate(in) + 3 Na(+)(in) + H(+)(in). It catalyses the reaction K(+)(in) + L-aspartate(out) + 3 Na(+)(out) + H(+)(out) = K(+)(out) + L-aspartate(in) + 3 Na(+)(in) + H(+)(in). The catalysed reaction is D-aspartate(out) + K(+)(in) + 3 Na(+)(out) + H(+)(out) = D-aspartate(in) + K(+)(out) + 3 Na(+)(in) + H(+)(in). Its function is as follows. Sodium-dependent, high-affinity amino acid transporter that mediates the uptake of L-glutamate and also L-aspartate and D-aspartate. Functions as a symporter that transports one amino acid molecule together with two or three Na(+) ions and one proton, in parallel with the counter-transport of one K(+) ion. Mediates Cl(-) flux that is not coupled to amino acid transport; this avoids the accumulation of negative charges due to aspartate and Na(+) symport. Plays a redundant role in the rapid removal of released glutamate from the synaptic cleft, which is essential for terminating the postsynaptic action of glutamate. The chain is Excitatory amino acid transporter 4 (Slc1a6) from Rattus norvegicus (Rat).